The following is a 65-amino-acid chain: DNA gyrase inhibitor YacG (65 aa).

Positions 9, 12, 28, and 32 each coordinate Zn(2+). The segment at 43-65 is disordered; that stretch reads EEKRIPSQSENSDSDDWSGQPEQ.

Belongs to the DNA gyrase inhibitor YacG family. Interacts with GyrB. The cofactor is Zn(2+).

Inhibits all the catalytic activities of DNA gyrase by preventing its interaction with DNA. Acts by binding directly to the C-terminal domain of GyrB, which probably disrupts DNA binding by the gyrase. The chain is DNA gyrase inhibitor YacG from Photorhabdus laumondii subsp. laumondii (strain DSM 15139 / CIP 105565 / TT01) (Photorhabdus luminescens subsp. laumondii).